The sequence spans 234 residues: MSRVADIPTATVGRVVTYIRVLEELEAQNVLRASSGELARRAGVTPFQVRKDLTYFGRFGTRGIGYTVAVLRRELLRALGLDQTWNVVIVGMGRLGHAIANYPGASDYQFQNVGLFDVAPDVVGREVRGLTIQHMSQLGPFVASVAGTPRQVDMGLLTVPAEHAQAAAQALVAAGVGGILNFAPVVLQTQDLHLPEAFAAPGRREVTVENVDFLAGMKRLAFYMLGPQAGPAEE.

Residues 17-56 (TYIRVLEELEAQNVLRASSGELARRAGVTPFQVRKDLTYF) constitute a DNA-binding region (H-T-H motif). 91–96 (GMGRLG) is an NAD(+) binding site.

The protein belongs to the transcriptional regulatory Rex family. As to quaternary structure, homodimer.

Its subcellular location is the cytoplasm. Modulates transcription in response to changes in cellular NADH/NAD(+) redox state. The sequence is that of Redox-sensing transcriptional repressor Rex from Deinococcus radiodurans (strain ATCC 13939 / DSM 20539 / JCM 16871 / CCUG 27074 / LMG 4051 / NBRC 15346 / NCIMB 9279 / VKM B-1422 / R1).